A 103-amino-acid polypeptide reads, in one-letter code: Stefin-2 (103 aa).

The Secondary area of contact motif lies at Gln52 to Gly56.

Belongs to the cystatin family.

The protein resides in the cytoplasm. Functionally, this is an intracellular thiol proteinase inhibitor. The protein is Stefin-2 (Stfa2) of Mus musculus (Mouse).